The sequence spans 337 residues: Nucleoid-associated protein HSM_0096 (337 aa).

The protein belongs to the YejK family.

Its subcellular location is the cytoplasm. It is found in the nucleoid. In Histophilus somni (strain 2336) (Haemophilus somnus), this protein is Nucleoid-associated protein HSM_0096.